Consider the following 185-residue polypeptide: uncharacterized protein (185 aa).

The N-terminal stretch at 1–24 (MPCNRAVFGAFVLALLISLQSVYF) is a signal peptide. A helical membrane pass occupies residues 50 to 70 (VAVNVIVEFSFDILFFLCGLL). Over residues 96–113 (ELEHVSSRRRNDSRDDST) the composition is skewed to basic and acidic residues. The segment at 96–185 (ELEHVSSRRR…LFTAGGIGLP (90 aa)) is disordered. Over residues 114-126 (VRNVSKTSPLASQ) the composition is skewed to polar residues. The span at 127-138 (RSRDHFDGDPRE) shows a compositional bias: basic and acidic residues. The span at 139 to 155 (PAPPAYSPADFYPPPAS) shows a compositional bias: pro residues.

It is found in the host membrane. This is an uncharacterized protein from Colorado tick fever virus (strain USA/Florio N-7180) (CTFV).